The primary structure comprises 159 residues: Capsid protein (159 aa).

The protein belongs to the virgaviridae capsid protein family.

It localises to the virion. Its function is as follows. Capsid protein self-assembles to form rod-shaped virions about 18 nm in diameter with a central canal enclosing the viral genomic RNA. The protein is Capsid protein (CP) of Tobacco mild green mosaic virus (TMGMV).